We begin with the raw amino-acid sequence, 141 residues long: uncharacterized protein (141 aa).

Helical transmembrane passes span phenylalanine 7–valine 27, phenylalanine 34–threonine 54, leucine 69–leucine 89, valine 97–glycine 117, and asparagine 121–phenylalanine 141. In terms of domain architecture, EamA spans alanine 14–valine 140.

The protein belongs to the EamA transporter family.

The protein resides in the cell membrane. This is an uncharacterized protein from Sinorhizobium sp.